The following is a 353-amino-acid chain: Photosystem II protein D1 (353 aa).

Thr2 carries the N-acetylthreonine modification. Phosphothreonine is present on Thr2. 3 consecutive transmembrane segments (helical) span residues 29–46, 118–133, and 142–156; these read YIGWFGVLMIPTLLTATS, HFLLGVACYMGREWEL, and WIAVAYSAPVAAATA. His118 serves as a coordination point for chlorophyll a. Tyr126 is a pheophytin a binding site. The [CaMn4O5] cluster site is built by Asp170 and Glu189. The helical transmembrane segment at 197-218 threads the bilayer; that stretch reads FHMLGVAGVFGGSLFSAMHGSL. His198 provides a ligand contact to chlorophyll a. A quinone contacts are provided by residues His215 and 264 to 265; that span reads SF. His215 contributes to the Fe cation binding site. His272 contributes to the Fe cation binding site. Residues 274–288 form a helical membrane-spanning segment; the sequence is FLAAWPVVGIWFTAL. His332, Glu333, Asp342, and Ala344 together coordinate [CaMn4O5] cluster. A propeptide spanning residues 345–353 is cleaved from the precursor; it reads SVEAPSINA.

Belongs to the reaction center PufL/M/PsbA/D family. As to quaternary structure, PSII is composed of 1 copy each of membrane proteins PsbA, PsbB, PsbC, PsbD, PsbE, PsbF, PsbH, PsbI, PsbJ, PsbK, PsbL, PsbM, PsbT, PsbX, PsbY, PsbZ, Psb30/Ycf12, at least 3 peripheral proteins of the oxygen-evolving complex and a large number of cofactors. It forms dimeric complexes. The D1/D2 heterodimer binds P680, chlorophylls that are the primary electron donor of PSII, and subsequent electron acceptors. It shares a non-heme iron and each subunit binds pheophytin, quinone, additional chlorophylls, carotenoids and lipids. D1 provides most of the ligands for the Mn4-Ca-O5 cluster of the oxygen-evolving complex (OEC). There is also a Cl(-1) ion associated with D1 and D2, which is required for oxygen evolution. The PSII complex binds additional chlorophylls, carotenoids and specific lipids. serves as cofactor. In terms of processing, tyr-161 forms a radical intermediate that is referred to as redox-active TyrZ, YZ or Y-Z. C-terminally processed by CTPA; processing is essential to allow assembly of the oxygen-evolving complex and thus photosynthetic growth.

Its subcellular location is the plastid. It is found in the chloroplast thylakoid membrane. It catalyses the reaction 2 a plastoquinone + 4 hnu + 2 H2O = 2 a plastoquinol + O2. Photosystem II (PSII) is a light-driven water:plastoquinone oxidoreductase that uses light energy to abstract electrons from H(2)O, generating O(2) and a proton gradient subsequently used for ATP formation. It consists of a core antenna complex that captures photons, and an electron transfer chain that converts photonic excitation into a charge separation. The D1/D2 (PsbA/PsbD) reaction center heterodimer binds P680, the primary electron donor of PSII as well as several subsequent electron acceptors. This chain is Photosystem II protein D1, found in Chara vulgaris (Common stonewort).